The following is a 167-amino-acid chain: Endoribonuclease YbeY (167 aa).

Zn(2+) contacts are provided by histidine 131, histidine 135, and histidine 141.

Belongs to the endoribonuclease YbeY family. It depends on Zn(2+) as a cofactor.

The protein resides in the cytoplasm. Its function is as follows. Single strand-specific metallo-endoribonuclease involved in late-stage 70S ribosome quality control and in maturation of the 3' terminus of the 16S rRNA. This Rickettsia africae (strain ESF-5) protein is Endoribonuclease YbeY.